The sequence spans 189 residues: Segregation and condensation protein B (189 aa).

This sequence belongs to the ScpB family. As to quaternary structure, homodimer. Homodimerization may be required to stabilize the binding of ScpA to the Smc head domains. Component of a cohesin-like complex composed of ScpA, ScpB and the Smc homodimer, in which ScpA and ScpB bind to the head domain of Smc. The presence of the three proteins is required for the association of the complex with DNA.

The protein resides in the cytoplasm. Its function is as follows. Participates in chromosomal partition during cell division. May act via the formation of a condensin-like complex containing Smc and ScpA that pull DNA away from mid-cell into both cell halves. The polypeptide is Segregation and condensation protein B (Streptococcus sanguinis (strain SK36)).